The primary structure comprises 778 residues: DNA topoisomerase 1 (778 aa).

A disordered region spans residues 1-141 (MNSSDEEDIA…ETPEEDQGYK (141 aa)). Over residues 17 to 26 (KSSSITSAST) the composition is skewed to low complexity. Composition is skewed to basic and acidic residues over residues 71 to 83 (VKTE…EPKS) and 100 to 121 (EKTT…ESKT). Residues 122–131 (QSDSQASVKS) are compositionally biased toward polar residues. 3 interaction with DNA regions span residues 367–368 (KY), 430–435 (RAGGEK), and 522–524 (TAK). Positions 374 to 778 (NSSVKGQSDF…IESADENWRF (405 aa)) constitute a Topo IB-type catalytic domain. Residue Tyr-736 is the O-(3'-phospho-DNA)-tyrosine intermediate of the active site.

Belongs to the type IB topoisomerase family.

It carries out the reaction ATP-independent breakage of single-stranded DNA, followed by passage and rejoining.. Its function is as follows. Releases the supercoiling and torsional tension of DNA introduced during the DNA replication and transcription by transiently cleaving and rejoining one strand of the DNA duplex. Introduces a single-strand break via transesterification at a target site in duplex DNA. The scissile phosphodiester is attacked by the catalytic tyrosine of the enzyme, resulting in the formation of a DNA-(3'-phosphotyrosyl)-enzyme intermediate and the expulsion of a 5'-OH DNA strand. The free DNA strand then rotates around the intact phosphodiester bond on the opposing strand, thus removing DNA supercoils. Finally, in the religation step, the DNA 5'-OH attacks the covalent intermediate to expel the active-site tyrosine and restore the DNA phosphodiester backbone. The chain is DNA topoisomerase 1 (TOP1) from Candida albicans (Yeast).